The primary structure comprises 189 residues: Elongation factor P (189 aa).

The protein belongs to the elongation factor P family.

It localises to the cytoplasm. It participates in protein biosynthesis; polypeptide chain elongation. Its function is as follows. Involved in peptide bond synthesis. Stimulates efficient translation and peptide-bond synthesis on native or reconstituted 70S ribosomes in vitro. Probably functions indirectly by altering the affinity of the ribosome for aminoacyl-tRNA, thus increasing their reactivity as acceptors for peptidyl transferase. In Ehrlichia chaffeensis (strain ATCC CRL-10679 / Arkansas), this protein is Elongation factor P.